Reading from the N-terminus, the 227-residue chain is 4'-phosphopantetheinyl transferase PptT (227 aa).

Residues Arg-48, Arg-56, Lys-75–Lys-78, Thr-92–His-93, and Asp-114 contribute to the CoA site. Asp-114, Ala-115, and Glu-116 together coordinate Mg(2+). CoA is bound by residues Glu-157, Lys-161, and Leu-171.

Belongs to the P-Pant transferase superfamily. It depends on Mg(2+) as a cofactor.

The enzyme catalyses apo-[ACP] + CoA = holo-[ACP] + adenosine 3',5'-bisphosphate + H(+). Its activity is regulated as follows. Inhibited by the amidino-urea compound 1-[(2,6-diethylphenyl)-3-N-ethylcarbamimodoyl]urea (compound 8918). It acts by binding to the phosphopantetheine pocket in the active site. Inhibition by compound 8918 kills M.tuberculosis. Functionally, transfers the 4'-phosphopantetheine moiety from coenzyme A to a Ser of acyl-carrier-protein. Involved in post-translational modification of various type-I polyketide synthases required for the formation of both mycolic acids and lipid virulence factors. Acts on Pks13, Mas, PpsA, PpsB, PpsC and PpsD. Also acts on AcpM, the meromycolate extension acyl carrier protein. In addition, is involved in the activation of the acyl carrier protein MbtL and the nonribosomal peptides synthases MbtB and MbtE, which are involved in the biosynthesis of the siderophore mycobactin. In terms of biological role, required for the replication and survival of Mycobacterium during the acute and chronic phases of infection in mice. This Mycobacterium tuberculosis (strain ATCC 25618 / H37Rv) protein is 4'-phosphopantetheinyl transferase PptT.